We begin with the raw amino-acid sequence, 178 residues long: Translation initiation factor IF-3 (178 aa).

It belongs to the IF-3 family. Monomer.

It localises to the cytoplasm. Its function is as follows. IF-3 binds to the 30S ribosomal subunit and shifts the equilibrium between 70S ribosomes and their 50S and 30S subunits in favor of the free subunits, thus enhancing the availability of 30S subunits on which protein synthesis initiation begins. In Macrococcus caseolyticus (strain JCSC5402) (Macrococcoides caseolyticum), this protein is Translation initiation factor IF-3.